Reading from the N-terminus, the 473-residue chain is MGYLIAFIILLILFVLLITIVPVVMVVYLKKKQLKLTFVPKSQTSFKKIVQKTKDLEEECEDLNNKNNELKKAISDQNLQIDLLKKNNENFLLNATSLTAEQAKKELFNLLKIKFKKELAQEYAKIKHEFNEAQEIYAQNILVETMEQIAEPLIVERSLFNIDIIDENLKGKIIGRDGRNKAVFENEGGVDLIVDRQQPIVGISTPNPIRREIARIVMQKLIDSKNIDINRIELLFKEEREKFEKKVFEIGKNVVEQTLGFFDLPEGIYSYIGRMKFRNSYGQNILSHSLEVAEYAERIAKLINIDPIKAKKAAFFHDIGKTIDFESDLDHVEAGLLIAKKFNLDDYIYNAIESHHNKVIPTTIYGALVKIVDTLSAARPGARVNSYDEYYSRVKELETICMRFEGVKSAYVIKSGRQLRVIVDSNLVSDEQLELLGHEIKVAIEENDLLTNYKIKIVLIKEKRISIDTNIIG.

Residues 4-24 traverse the membrane as a helical segment; it reads LIAFIILLILFVLLITIVPVV. In terms of domain architecture, KH spans 158 to 218; that stretch reads SLFNIDIIDE…IRREIARIVM (61 aa). The HD domain maps to 285-378; sequence ILSHSLEVAE…VKIVDTLSAA (94 aa).

This sequence belongs to the RNase Y family.

It localises to the cell membrane. Endoribonuclease that initiates mRNA decay. The polypeptide is Ribonuclease Y (Ureaplasma parvum serovar 3 (strain ATCC 27815 / 27 / NCTC 11736)).